The chain runs to 554 residues: Potassium-transporting ATPase potassium-binding subunit (554 aa).

12 consecutive transmembrane segments (helical) span residues 1–21, 59–79, 131–151, 174–194, 246–266, 279–299, 323–343, 352–372, 375–395, 412–432, 481–501, and 525–545; these read MSSQ…LALA, WPAY…FLYL, GLAV…VALV, VRIL…AGAI, PNPL…FALT, GYAI…LMMW, FGIA…TGAV, GFGG…PGGV, GLYG…LMVG, FAAC…AVAM, IGIA…ALAG, and GLLV…ALAL.

It belongs to the KdpA family. In terms of assembly, the system is composed of three essential subunits: KdpA, KdpB and KdpC.

Its subcellular location is the cell membrane. In terms of biological role, part of the high-affinity ATP-driven potassium transport (or Kdp) system, which catalyzes the hydrolysis of ATP coupled with the electrogenic transport of potassium into the cytoplasm. This subunit binds the extracellular potassium ions and delivers the ions to the membrane domain of KdpB through an intramembrane tunnel. This is Potassium-transporting ATPase potassium-binding subunit from Streptomyces griseus subsp. griseus (strain JCM 4626 / CBS 651.72 / NBRC 13350 / KCC S-0626 / ISP 5235).